Consider the following 71-residue polypeptide: Paralithocin 2 (71 aa).

An N-terminal signal peptide occupies residues 1–23; it reads MGAAKVLLVVLAVMVAVPNLAEG. Cystine bridges form between Cys-29–Cys-58, Cys-34–Cys-54, Cys-39–Cys-52, and Cys-44–Cys-55. Arg-70 bears the Arginine amide; partial mark.

It belongs to the paralithocin family. The amidated form is probably the active form.

Functionally, has antibacterial activity, mainly against marine Gram-positive bacteria like C.maltaromaticum (MIC=50 uM), C.mobile (MIC=50 uM), C.divergens (MIC=50 uM) and C.funditum (MIC=25 uM) but also against C.glutamicum (MIC=12.5 uM). Has very little or no activity against Gram-negative bacteria. The chain is Paralithocin 2 from Paralithodes camtschaticus (Red king crab).